Consider the following 642-residue polypeptide: Kelch-like protein 17 (642 aa).

A disordered region spans residues 1–53 (MQPRSERPAGRTQSPEHGSPGPGPEAPPPPPPQPPAPEAERTRPRQARPAAPM). Residues 21–37 (GPGPEAPPPPPPQPPAP) are compositionally biased toward pro residues. A BTB domain is found at 92 to 159 (CDIVLHVAAK…AYTAEIVVGE (68 aa)). A BACK domain is found at 194–296 (CLGIRGFADA…SRDFLLGHVD (103 aa)). An interaction with F-actin region spans residues 289-641 (DFLLGHVDAE…SPTLSVSSTS (353 aa)). Kelch repeat units lie at residues 343-389 (VLFA…AVGN), 390-436 (RLYA…ALHG), 438-483 (LYSA…TLDG), 484-530 (NLYA…VLEG), 532-577 (LYVA…AMDG), and 578-624 (WLYA…VLEL). Residues 640-642 (TSL) form an interaction with PDZK1 region.

Interacts with F-actin; the interaction disrupts the F-actin structures and leads to marked changes of neuronal morphology. Component of a complex, composed of PDZK1, SYNGAP1, KLHL17 and NMDA receptors. Interacts directly with PDZK1 (via PDZ1 domain); the interaction is important for integrity of actin cytoskeleton structures in neurons. Interacts with DLG4 and SYNGAP1. Interacts (via kelch repeats) with GRIK2 (via C-terminus); the interaction targets GRIK2 for degradation via ubiquitin-proteasome pathway. Interacts with GRIK1. Interacts with (via BTB domain) CUL3; the interaction regulates surface GRIK2 expression.

The protein resides in the postsynaptic density. The protein localises to the synapse. Its pathway is protein modification; protein ubiquitination. Substrate-recognition component of some cullin-RING-based BCR (BTB-CUL3-RBX1) E3 ubiquitin-protein ligase complexes. The BCR(KLHL17) complex mediates the ubiquitination and subsequent degradation of GLUR6. May play a role in the actin-based neuronal function. In Homo sapiens (Human), this protein is Kelch-like protein 17 (KLHL17).